We begin with the raw amino-acid sequence, 477 residues long: Acylamidase (477 aa).

Active-site charge relay system residues include lysine 82 and serine 157. Serine 181 serves as the catalytic Acyl-ester intermediate.

Belongs to the amidase family.

It catalyses the reaction a monocarboxylic acid amide + H2O = a monocarboxylate + NH4(+). The catalysed reaction is an anilide + H2O = aniline + a carboxylate + H(+). It carries out the reaction an N-acyl-L-amino acid + H2O = an L-alpha-amino acid + a carboxylate. The enzyme catalyses an N-acetyl-L-cysteine-S-conjugate + H2O = an S-substituted L-cysteine + acetate. Amidase activity is completely suppressed by inhibitors of serine proteases (phenylmethylsulfonyl fluoride and diisopropyl fluorophosphate), partially inhibited by copper and mercury ions, but is not affected by inhibitors of aliphatic amidases (acetaldehyde and nitrophenyl disulfides) or by EDTA. Its function is as follows. Amidase with broad substrate specificity, catalyzing the hydrolysis of a wide range of N-substituted amides, and, to a lesser extent, the hydrolysis of non-substituted amides. Acid para-nitroanilides (4'-nitroacetanilide, Gly-pNA, Ala-pNA, Leu-pNA) are the best substrates for this enzyme. N-substituted acrylamides (isopropyl acrylamide, N,N-dimethyl-aminopropyl acrylamide, and methylene-bis-acrylamide), N-acetyl derivatives of glycine, alanine and leucine, and aliphatic amides (acetamide, acrylamide, isobutyramide, n-butyramide, and valeramide) can also be used as substrates but with less efficiency. This chain is Acylamidase, found in Rhodococcus erythropolis (Arthrobacter picolinophilus).